Reading from the N-terminus, the 426-residue chain is 6-Hydroxy-7-prenyldeoxybrevianamide E synthase notC' (426 aa).

Glu-94 contacts substrate. 3 residues coordinate dimethylallyl diphosphate: Arg-105, Lys-191, and Tyr-193. Tyr-195 lines the substrate pocket. Lys-267, Tyr-269, Gln-352, Tyr-354, Tyr-418, and Tyr-422 together coordinate dimethylallyl diphosphate.

The protein belongs to the tryptophan dimethylallyltransferase family.

It carries out the reaction 6-hydroxydeoxybrevianamide E + dimethylallyl diphosphate = notoamide S + diphosphate. Its pathway is alkaloid biosynthesis. Functionally, prenyltransferase; part of the gene cluster that mediates the biosynthesis of notoamide, a fungal indole alkaloid that belongs to a family of natural products containing a characteristic bicyclo[2.2.2]diazaoctane core. The first step of notoamide biosynthesis involves coupling of L-proline and L-tryptophan by the bimodular NRPS notE', to produce cyclo-L-tryptophan-L-proline called brevianamide F. The reverse prenyltransferase notF' then acts as a deoxybrevianamide E synthase and converts brevianamide F to deoxybrevianamide E via reverse prenylation at C-2 of the indole ring leading to the bicyclo[2.2.2]diazaoctane core. Deoxybrevianamide E is further hydroxylated at C-6 of the indole ring, likely catalyzed by the cytochrome P450 monooxygenase notG', to yield 6-hydroxy-deoxybrevianamide E. 6-hydroxy-deoxybrevianamide E is a specific substrate of the prenyltransferase notC' for normal prenylation at C-7 to produce 6-hydroxy-7-prenyl-deoxybrevianamide, also called notoamide S. As the proposed pivotal branching point in notoamide biosynthesis, notoamide S can be diverted to notoamide E through an oxidative pyran ring closure putatively catalyzed by either notH' cytochrome P450 monooxygenase or the notD' FAD-linked oxidoreductase. This step would be followed by an indole 2,3-epoxidation-initiated pinacol-like rearrangement catalyzed by the notB' FAD-dependent monooxygenase leading to the formation of notoamide C and notoamide D. On the other hand notoamide S is converted to notoamide T by notH' (or notD'), a bifunctional oxidase that also functions as the intramolecular Diels-Alderase responsible for generation of (-)-notoamide T. To generate antipodal (+)-notoaminide T, notH (or notD) in Aspergillus strain MF297-2 is expected to catalyze a Diels-Alder reaction leading to the opposite stereochemistry. The remaining oxidoreductase notD' (or notH') likely catalyzes the oxidative pyran ring formation to yield (-)-stephacidin A. The FAD-dependent monooxygenase notI' is highly similar to notB' and is predicted to catalyze a similar conversion from (-)-stephacidin A to (+)-notoamide B via the 2,3-epoxidation of (-)-stephacidin A followed by a pinacol-type rearrangement. Finally, it remains unclear which enzyme could be responsible for the final hydroxylation steps leading to notoamide A and sclerotiamide. This chain is 6-Hydroxy-7-prenyldeoxybrevianamide E synthase notC', found in Aspergillus versicolor.